The following is a 697-amino-acid chain: Elongation factor G 2 (697 aa).

In terms of domain architecture, tr-type G spans 5–280; sequence SKYRNIGIFA…AVVDYLPAPN (276 aa). Residues 14 to 21, 78 to 82, and 132 to 135 contribute to the GTP site; these read AHVDAGKT, DTPGH, and NKLD.

Belongs to the TRAFAC class translation factor GTPase superfamily. Classic translation factor GTPase family. EF-G/EF-2 subfamily.

It localises to the cytoplasm. Functionally, catalyzes the GTP-dependent ribosomal translocation step during translation elongation. During this step, the ribosome changes from the pre-translocational (PRE) to the post-translocational (POST) state as the newly formed A-site-bound peptidyl-tRNA and P-site-bound deacylated tRNA move to the P and E sites, respectively. Catalyzes the coordinated movement of the two tRNA molecules, the mRNA and conformational changes in the ribosome. This chain is Elongation factor G 2, found in Shewanella sp. (strain MR-4).